A 61-amino-acid polypeptide reads, in one-letter code: Small ribosomal subunit protein uS14 (61 aa).

Residues cysteine 24, cysteine 27, cysteine 40, and cysteine 43 each coordinate Zn(2+).

It belongs to the universal ribosomal protein uS14 family. Zinc-binding uS14 subfamily. As to quaternary structure, part of the 30S ribosomal subunit. Contacts proteins S3 and S10. Requires Zn(2+) as cofactor.

Binds 16S rRNA, required for the assembly of 30S particles and may also be responsible for determining the conformation of the 16S rRNA at the A site. The polypeptide is Small ribosomal subunit protein uS14 (Desulfatibacillum aliphaticivorans).